The primary structure comprises 361 residues: Phosphoserine aminotransferase (361 aa).

L-glutamate is bound at residue Arg42. Pyridoxal 5'-phosphate contacts are provided by residues 76–77 (AR), Trp102, Thr153, Asp173, and Gln196. At Lys197 the chain carries N6-(pyridoxal phosphate)lysine. 238 to 239 (NT) contributes to the pyridoxal 5'-phosphate binding site.

This sequence belongs to the class-V pyridoxal-phosphate-dependent aminotransferase family. SerC subfamily. Homodimer. Pyridoxal 5'-phosphate serves as cofactor.

The protein localises to the cytoplasm. The enzyme catalyses O-phospho-L-serine + 2-oxoglutarate = 3-phosphooxypyruvate + L-glutamate. It catalyses the reaction 4-(phosphooxy)-L-threonine + 2-oxoglutarate = (R)-3-hydroxy-2-oxo-4-phosphooxybutanoate + L-glutamate. The protein operates within amino-acid biosynthesis; L-serine biosynthesis; L-serine from 3-phospho-D-glycerate: step 2/3. It participates in cofactor biosynthesis; pyridoxine 5'-phosphate biosynthesis; pyridoxine 5'-phosphate from D-erythrose 4-phosphate: step 3/5. Functionally, catalyzes the reversible conversion of 3-phosphohydroxypyruvate to phosphoserine and of 3-hydroxy-2-oxo-4-phosphonooxybutanoate to phosphohydroxythreonine. The sequence is that of Phosphoserine aminotransferase from Yersinia enterocolitica serotype O:8 / biotype 1B (strain NCTC 13174 / 8081).